The sequence spans 1085 residues: Activating transcription factor 7-interacting protein 1 (1085 aa).

Disordered stretches follow at residues 1–22, 47–109, 127–245, 329–381, 469–499, 517–560, 650–843, 889–910, and 932–975; these read MDNTDEPQKKVFKARKTMRASD, GKHE…VNVT, LGSN…NTDS, PNKS…VHSK, AAKEDMKKKQENTPNPSLSSGKAASSTANAN, RNVG…TSSP, ASTN…TTIH, NSVRGAVMPSPSLRPVNPQTGS, and GAPQ…ANTS. A compositionally biased stretch (polar residues) spans 54–64; sequence SDLNSPLSNTD. Basic and acidic residues-rich tracts occupy residues 82–91 and 133–150; these read SEIKRPESRA and NFHEENNIKNRLDQRESD. Polar residues-rich tracts occupy residues 151 to 165 and 173 to 182; these read TPSGENKSNCDNSFS and NDITIISNSP. Composition is skewed to basic and acidic residues over residues 347-379 and 469-479; these read EREVVHKEEEKHTERGEVSRRKRSKSEDMDSVH and AAKEDMKKKQE. Residues 446–480 adopt a coiled-coil conformation; it reads NKRHKTVLTELQAKITRLTKRFGAAKEDMKKKQEN. Composition is skewed to low complexity over residues 487–499, 529–547, and 651–666; these read SSGKAASSTANAN, APVSAAPASSLAAPQTPAS, and STNTTKPNNSPSVSSP. The span at 667–717 shows a compositional bias: polar residues; the sequence is GVQRNSPASAGSVRTTLAVQAVSTTHPVAQTTRTSLPTVGTSGLHNSTSSR. Positions 732-743 are enriched in low complexity; it reads TAPTEPPTITAP. 3 stretches are compositionally biased toward polar residues: residues 746–775, 792–810, and 830–843; these read ENQTSRPPTDSSANKRTAEGPTQSVKVTGS, SSQAEAKKQNQTASTAQSI, and TGVPTSGPSQTTIH. Residues 950-968 are compositionally biased toward pro residues; the sequence is PRPVHPAPLPEAPQPPRLP. In terms of domain architecture, Fibronectin type-III spans 976 to 1082; sequence LPQKPQLKLA…DPQSTDVISS (107 aa).

Belongs to the MCAF family.

It is found in the nucleus. Its function is as follows. Recruiter that couples transcriptional factors to general transcription apparatus and thereby modulates transcription regulation and chromatin formation. Can both act as an activator or a repressor depending on the context. Mediates MBD1-dependent transcriptional repression, probably by recruiting complexes containing histone methyltransferase activity. May belong to a complex that represses transcription and couples DNA methylation and histone H3 'Lys-9' trimethylation (H3K9me3). This Gallus gallus (Chicken) protein is Activating transcription factor 7-interacting protein 1 (ATF7IP).